A 538-amino-acid polypeptide reads, in one-letter code: Protein NRT1/ PTR FAMILY 5.11 (538 aa).

2 helical membrane passes run 44–64 (FAYF…LGES) and 74–94 (AWTG…DSYL). A Phosphothreonine modification is found at Thr99. The next 10 helical transmembrane spans lie at 100–120 (IIIS…STMI), 134–154 (TIFF…NPCI), 175–194 (SFFN…TRLV), 204–224 (WSLG…LFLL), 308–328 (IPIW…PTFF), 342–362 (GLLV…VVFI), 389–409 (IGTG…VETK), 424–444 (VWWL…TMVG), 463–483 (ALNL…ISVI), and 507–527 (YFYW…LWFA).

Belongs to the major facilitator superfamily. Proton-dependent oligopeptide transporter (POT/PTR) (TC 2.A.17) family. Expressed in shoots and roots.

Its subcellular location is the membrane. This chain is Protein NRT1/ PTR FAMILY 5.11 (NPF5.11), found in Arabidopsis thaliana (Mouse-ear cress).